Consider the following 332-residue polypeptide: 2,3-diketo-L-gulonate reductase (332 aa).

Histidine 44 serves as the catalytic Proton donor. NAD(+) is bound by residues 168–174 (ITMVDMS), 224–225 (WK), and 304–306 (GHE).

This sequence belongs to the LDH2/MDH2 oxidoreductase family. DlgD subfamily. As to quaternary structure, homodimer.

The protein resides in the cytoplasm. The enzyme catalyses 3-dehydro-L-gulonate + NAD(+) = 2,3-dioxo-L-gulonate + NADH + H(+). It carries out the reaction 3-dehydro-L-gulonate + NADP(+) = 2,3-dioxo-L-gulonate + NADPH + H(+). Catalyzes the reduction of 2,3-diketo-L-gulonate in the presence of NADH, to form 3-keto-L-gulonate. This is 2,3-diketo-L-gulonate reductase from Haemophilus influenzae (strain ATCC 51907 / DSM 11121 / KW20 / Rd).